Reading from the N-terminus, the 328-residue chain is D-cysteine desulfhydrase (328 aa).

Position 51 is an N6-(pyridoxal phosphate)lysine (Lys51).

This sequence belongs to the ACC deaminase/D-cysteine desulfhydrase family. Homodimer. The cofactor is pyridoxal 5'-phosphate.

The enzyme catalyses D-cysteine + H2O = hydrogen sulfide + pyruvate + NH4(+) + H(+). Its function is as follows. Catalyzes the alpha,beta-elimination reaction of D-cysteine and of several D-cysteine derivatives. It could be a defense mechanism against D-cysteine. The polypeptide is D-cysteine desulfhydrase (Salmonella paratyphi B (strain ATCC BAA-1250 / SPB7)).